The chain runs to 98 residues: Putative protein adenylyltransferase MJ0128 (98 aa).

A GSX(10)DXD motif motif is present at residues 31-45 (GSYARNEQTEKSDID). Mg(2+)-binding residues include D43, D45, and D75.

The protein belongs to the MntA antitoxin family. Probably forms a complex with cognate toxin MJ0127. It depends on Mg(2+) as a cofactor.

The catalysed reaction is L-tyrosyl-[protein] + ATP = O-(5'-adenylyl)-L-tyrosyl-[protein] + diphosphate. It carries out the reaction O-(5'-adenylyl)-L-tyrosyl-[protein] + ATP = O-[5'-(adenylyl-(5'-&gt;3')-adenylyl)]-L-tyrosyl-[protein] + diphosphate. Its function is as follows. Probable antitoxin component of a putative type VII toxin-antitoxin (TA) system. Neutralizes cognate toxic MJ0127 by di-AMPylation. The sequence is that of Putative protein adenylyltransferase MJ0128 from Methanocaldococcus jannaschii (strain ATCC 43067 / DSM 2661 / JAL-1 / JCM 10045 / NBRC 100440) (Methanococcus jannaschii).